The sequence spans 236 residues: Phosphoribosylaminoimidazole-succinocarboxamide synthase (236 aa).

The protein belongs to the SAICAR synthetase family.

The enzyme catalyses 5-amino-1-(5-phospho-D-ribosyl)imidazole-4-carboxylate + L-aspartate + ATP = (2S)-2-[5-amino-1-(5-phospho-beta-D-ribosyl)imidazole-4-carboxamido]succinate + ADP + phosphate + 2 H(+). It functions in the pathway purine metabolism; IMP biosynthesis via de novo pathway; 5-amino-1-(5-phospho-D-ribosyl)imidazole-4-carboxamide from 5-amino-1-(5-phospho-D-ribosyl)imidazole-4-carboxylate: step 1/2. This chain is Phosphoribosylaminoimidazole-succinocarboxamide synthase, found in Pseudomonas syringae pv. tomato (strain ATCC BAA-871 / DC3000).